We begin with the raw amino-acid sequence, 360 residues long: Arginase, non-hepatic 3 (360 aa).

Histidine 122, aspartate 145, histidine 147, and aspartate 149 together coordinate Mn(2+). Residues 147-151 (HADIN), 158-160 (SGN), and aspartate 204 contribute to the substrate site. The Mn(2+) site is built by aspartate 253 and aspartate 255. Residues threonine 267 and glutamate 298 each contribute to the substrate site.

The protein belongs to the arginase family. Homotrimer. It depends on Mn(2+) as a cofactor. In terms of tissue distribution, expressed at differing tadpole stages in tail, intestine, hindlimb and trunk region. Strongest in tadpole tail.

It carries out the reaction L-arginine + H2O = urea + L-ornithine. It functions in the pathway nitrogen metabolism; urea cycle; L-ornithine and urea from L-arginine: step 1/1. Its function is as follows. As well as its role in the urea cycle, may be involved in tissue remodeling. This chain is Arginase, non-hepatic 3 (arg2-c), found in Xenopus laevis (African clawed frog).